Consider the following 201-residue polypeptide: Dephospho-CoA kinase (201 aa).

A DPCK domain is found at 4–201 (TIGLTGGIAS…ILKQWDALEK (198 aa)). 12 to 17 (ASGKST) provides a ligand contact to ATP.

It belongs to the CoaE family.

The protein resides in the cytoplasm. It catalyses the reaction 3'-dephospho-CoA + ATP = ADP + CoA + H(+). It functions in the pathway cofactor biosynthesis; coenzyme A biosynthesis; CoA from (R)-pantothenate: step 5/5. In terms of biological role, catalyzes the phosphorylation of the 3'-hydroxyl group of dephosphocoenzyme A to form coenzyme A. In Geobacillus kaustophilus (strain HTA426), this protein is Dephospho-CoA kinase.